The chain runs to 811 residues: MEYNAKNIEYKWQQIWKKNGYSEPKDDYSLPKKYILSMFPYPSGRLHMGHVRNYSIGDALSRYYRNRGYNVLQPIGFDSFGMPAENAAIKHKIHPKIWTYDNIDYMTKELDALGFSFSKKRLFATSDPLYTRWEQEFFIRMYEKGLVYRKSAVVNWCENDQTVLANEQVEDGKCWRCGHEVIQKEMPGYYLKITDYANELLECLKDLEGKWPNQVLTMQENWIGKSYGLEFEFKFDSSSKILLDGMDGFKVFTTRPDTIYGVSYAAIAPEHIVVKKLLEKNILDDATSAKLKFILNQSPKQRQSIDKDGVSLGLNVIHPLTNELIPVWCANFVLAEYGGGAVMSVPAHDERDFEFASKFNLNIKQIIKSDTLPYCEKSGVYINSELINGLAYEEAREKIISKFEKEGWGNRVTNYKLRDWGISRQRYWGAPIPMIHCKKCGVVPENISNLPVKLPDDVVITGEGNPLDKHSEFKNCKCPKCGSQATRETDTMDTFFESSWYFARFASDEKTWEDVAFDKKSVDYWMSVDQYIGGIEHAILHLLYARFFQKALRDLGYLRDCEPFDSLLTQGMVLKDGSKMSKSKGNTVDPDDIINKFGADTARLFILFAAPPQKELEWNDSAVEGAFKFINRLYDRSDNAYKTEILPQINHSNLNKDEKYARLKVYEALKKSTDVFENSFAFNTLIAACMEALNGLNAQNNKDIWTEGYFIILNLLEPIIPHACHELSNELFGLKNFTKLSLKDEVFVKDSLNLAITVNGKRRSEIEVSAFESDDKILEIAKQEVSKWIEGKEILKEIYVPNKLVNLVIKG.

The 'HIGH' region motif lies at P40–H50. Residues K579–S583 carry the 'KMSKS' region motif. Position 582 (K582) interacts with ATP.

The protein belongs to the class-I aminoacyl-tRNA synthetase family.

The protein localises to the cytoplasm. It carries out the reaction tRNA(Leu) + L-leucine + ATP = L-leucyl-tRNA(Leu) + AMP + diphosphate. The protein is Leucine--tRNA ligase of Campylobacter fetus subsp. fetus (strain 82-40).